The primary structure comprises 459 residues: Chromosomal replication initiator protein DnaA (459 aa).

Positions 1–74 are domain I, interacts with DnaA modulators; the sequence is MQKIETFWHF…DEMAQDHFNE (74 aa). Residues 74–122 form a domain II region; it reads ERISFRLELREPAESEAQTVRTSAQKNREDKKPAAEKTQGVTSRKTNPS. Residues 87 to 122 are disordered; that stretch reads ESEAQTVRTSAQKNREDKKPAAEKTQGVTSRKTNPS. Residues 89–98 are compositionally biased toward polar residues; sequence EAQTVRTSAQ. A compositionally biased stretch (basic and acidic residues) spans 99 to 108; that stretch reads KNREDKKPAA. Over residues 112–122 the composition is skewed to polar residues; the sequence is QGVTSRKTNPS. Positions 123–339 are domain III, AAA+ region; that stretch reads QLNASFTFDA…GALKRVLAFS (217 aa). 4 residues coordinate ATP: G167, G169, K170, and T171. Positions 340 to 459 are domain IV, binds dsDNA; it reads RFTGHSISLD…FNALMHILRG (120 aa).

This sequence belongs to the DnaA family. In terms of assembly, oligomerizes as a right-handed, spiral filament on DNA at oriC.

It is found in the cytoplasm. In terms of biological role, plays an essential role in the initiation and regulation of chromosomal replication. ATP-DnaA binds to the origin of replication (oriC) to initiate formation of the DNA replication initiation complex once per cell cycle. Binds the DnaA box (a 9 base pair repeat at the origin) and separates the double-stranded (ds)DNA. Forms a right-handed helical filament on oriC DNA; dsDNA binds to the exterior of the filament while single-stranded (ss)DNA is stabiized in the filament's interior. The ATP-DnaA-oriC complex binds and stabilizes one strand of the AT-rich DNA unwinding element (DUE), permitting loading of DNA polymerase. After initiation quickly degrades to an ADP-DnaA complex that is not apt for DNA replication. Binds acidic phospholipids. This Nitrosomonas europaea (strain ATCC 19718 / CIP 103999 / KCTC 2705 / NBRC 14298) protein is Chromosomal replication initiator protein DnaA.